We begin with the raw amino-acid sequence, 336 residues long: UPF0324 membrane protein BT_1919 (336 aa).

Transmembrane regions (helical) follow at residues 2–19 (LHGVLLIALFSCAAFYIG), 23–45 (FVRSISFSPMIVGIILGMLYANS), 85–107 (IGLPAMLIDVIIVAVTICGGIYL), 117–134 (IALLTSIGSGICGAAAIL), 147–169 (TAVSVSTVVIFGTISMFLYPFLY), 210–232 (AIIVKMIRVMMLVPVLLITTYLV), 253–275 (WFAIGFMGVIAFNSFDLLPAQLV), and 310–332 (FVLALLLYVWLVVGGYFLVKYLT).

This sequence belongs to the UPF0324 family.

It is found in the cell membrane. The protein is UPF0324 membrane protein BT_1919 of Bacteroides thetaiotaomicron (strain ATCC 29148 / DSM 2079 / JCM 5827 / CCUG 10774 / NCTC 10582 / VPI-5482 / E50).